Consider the following 469-residue polypeptide: GTPase Der (469 aa).

EngA-type G domains follow at residues 3–166 (PVIA…PEDE) and 177–350 (LRLA…ESAN). GTP-binding positions include 9–16 (GRPNVGKS), 56–60 (DTGGI), 118–121 (NKVD), 183–190 (GRPNVGKS), 230–234 (DTAGV), and 295–298 (NKWD). Positions 351-435 (LKVSPAKLTQ…PVKIEFKTSE (85 aa)) constitute a KH-like domain.

This sequence belongs to the TRAFAC class TrmE-Era-EngA-EngB-Septin-like GTPase superfamily. EngA (Der) GTPase family. As to quaternary structure, associates with the 50S ribosomal subunit.

Its function is as follows. GTPase that plays an essential role in the late steps of ribosome biogenesis. The sequence is that of GTPase Der from Acinetobacter baumannii (strain SDF).